The chain runs to 355 residues: tRNA N6-adenosine threonylcarbamoyltransferase (355 aa).

The Fe cation site is built by His-113 and His-117. Substrate contacts are provided by residues 135 to 139, Asp-168, Gly-181, and Asn-279; that span reads LASGG. Asp-307 contributes to the Fe cation binding site.

The protein belongs to the KAE1 / TsaD family. Fe(2+) is required as a cofactor.

The protein resides in the cytoplasm. It catalyses the reaction L-threonylcarbamoyladenylate + adenosine(37) in tRNA = N(6)-L-threonylcarbamoyladenosine(37) in tRNA + AMP + H(+). Functionally, required for the formation of a threonylcarbamoyl group on adenosine at position 37 (t(6)A37) in tRNAs that read codons beginning with adenine. Is involved in the transfer of the threonylcarbamoyl moiety of threonylcarbamoyl-AMP (TC-AMP) to the N6 group of A37, together with TsaE and TsaB. TsaD likely plays a direct catalytic role in this reaction. The chain is tRNA N6-adenosine threonylcarbamoyltransferase from Bradyrhizobium sp. (strain BTAi1 / ATCC BAA-1182).